The sequence spans 413 residues: Elongation factor 1-alpha (413 aa).

A tr-type G domain is found at 5-211 (KEHINLAFIG…DNLAAPEKPV (207 aa)). The G1 stretch occupies residues 14 to 21 (GHVDHGKS). Residue 14 to 21 (GHVDHGKS) coordinates GTP. Serine 21 lines the Mg(2+) pocket. The segment at 60–64 (GVTID) is G2. Residues 81 to 84 (DCPG) are G3. GTP-binding positions include 81–85 (DCPGH) and 136–139 (NKID). The segment at 136–139 (NKID) is G4. Residues 175–177 (SAF) form a G5 region.

The protein belongs to the TRAFAC class translation factor GTPase superfamily. Classic translation factor GTPase family. EF-Tu/EF-1A subfamily.

It is found in the cytoplasm. It carries out the reaction GTP + H2O = GDP + phosphate + H(+). Functionally, GTP hydrolase that promotes the GTP-dependent binding of aminoacyl-tRNA to the A-site of ribosomes during protein biosynthesis. The chain is Elongation factor 1-alpha from Methanobrevibacter smithii (strain ATCC 35061 / DSM 861 / OCM 144 / PS).